Here is a 98-residue protein sequence, read N- to C-terminus: Protein translation factor SUI1 homolog (98 aa).

Belongs to the SUI1 family.

This Thermococcus onnurineus (strain NA1) protein is Protein translation factor SUI1 homolog.